The sequence spans 262 residues: Carbonic anhydrase 1 (262 aa).

Alanine 2 carries the N-acetylalanine modification. The region spanning 4–261 is the Alpha-carbonic anhydrase domain; it reads LNWSYEGENG…LKGRQVKASF (258 aa). Histidine 65 (proton donor/acceptor) is an active-site residue. Histidine 95, histidine 97, and histidine 120 together coordinate Zn(2+). Residues threonine 200 and 200 to 201 contribute to the substrate site; that span reads TH.

The protein belongs to the alpha-carbonic anhydrase family. It depends on Zn(2+) as a cofactor.

The protein resides in the cytoplasm. The enzyme catalyses hydrogencarbonate + H(+) = CO2 + H2O. It carries out the reaction urea = cyanamide + H2O. Its activity is regulated as follows. Inhibited by acetazolamide. Functionally, catalyzes the reversible hydration of carbon dioxide. Can hydrate cyanamide to urea. This is Carbonic anhydrase 1 (CA1) from Monodelphis domestica (Gray short-tailed opossum).